Here is a 313-residue protein sequence, read N- to C-terminus: Nematocyst expressed protein 8 (313 aa).

The signal sequence occupies residues 1 to 19 (MLRRPLLLVLFTVFSTLYA). A disordered region spans residues 24-56 (GVSPPTNESEAEVSPGDDEGPPEPGNEPDVNWR). A compositionally biased stretch (acidic residues) spans 32 to 44 (SEAEVSPGDDEGP). 3 ShKT domains span residues 65–99 (CKDK…CRFC), 109–145 (CKDL…CELC), and 151–186 (FKYT…CRKY). Disulfide bonds link Cys-65–Cys-99, Cys-72–Cys-92, Cys-81–Cys-96, Cys-109–Cys-145, Cys-127–Cys-142, Cys-160–Cys-179, and Cys-169–Cys-183. A compositionally biased stretch (low complexity) spans 222–244 (TAAPSTQPAETTKAPPNTAAPTA). Residues 222-313 (TAAPSTQPAE…LCDEKHSSQQ (92 aa)) are disordered. The segment covering 245 to 265 (APTPAPTPAPAPAPTPAPVAP) has biased composition (pro residues). The segment covering 280–297 (TPEEQDDNSADESTEIEA) has biased composition (acidic residues).

It belongs to the NEP3 family. In terms of tissue distribution, nematocytes. In late planulae, is only expressed in a handful of nematocytes in the lower pharynx. Is absent from the tentacles and outer body wall.

The protein localises to the nematocyst. It is found in the secreted. Functionally, probable toxin probably only used for predation. The sequence is that of Nematocyst expressed protein 8 from Nematostella vectensis (Starlet sea anemone).